We begin with the raw amino-acid sequence, 205 residues long: Small ribosomal subunit protein mS26 (205 aa).

Residues 1 to 27 constitute a mitochondrion transit peptide; that stretch reads MLRALSRLGAGTPCRPRAPLVLPARGR.

This sequence belongs to the mitochondrion-specific ribosomal protein mS26 family. As to quaternary structure, component of the mitochondrial small ribosomal subunit (mt-SSU). Mature mammalian 55S mitochondrial ribosomes consist of a small (28S) and a large (39S) subunit. The 28S small subunit contains a 12S ribosomal RNA (12S mt-rRNA) and 30 different proteins. The 39S large subunit contains a 16S rRNA (16S mt-rRNA), a copy of mitochondrial valine transfer RNA (mt-tRNA(Val)), which plays an integral structural role, and 52 different proteins.

It is found in the mitochondrion. This is Small ribosomal subunit protein mS26 (MRPS26) from Homo sapiens (Human).